The chain runs to 218 residues: Imidazole glycerol phosphate synthase subunit HisH (218 aa).

The Glutamine amidotransferase type-1 domain occupies 12 to 218 (SIVVVDYGLG…RNFVDYCADQ (207 aa)). The active-site Nucleophile is cysteine 88. Residues histidine 196 and glutamate 198 contribute to the active site.

In terms of assembly, heterodimer of HisH and HisF.

The protein resides in the cytoplasm. The catalysed reaction is 5-[(5-phospho-1-deoxy-D-ribulos-1-ylimino)methylamino]-1-(5-phospho-beta-D-ribosyl)imidazole-4-carboxamide + L-glutamine = D-erythro-1-(imidazol-4-yl)glycerol 3-phosphate + 5-amino-1-(5-phospho-beta-D-ribosyl)imidazole-4-carboxamide + L-glutamate + H(+). It catalyses the reaction L-glutamine + H2O = L-glutamate + NH4(+). It functions in the pathway amino-acid biosynthesis; L-histidine biosynthesis; L-histidine from 5-phospho-alpha-D-ribose 1-diphosphate: step 5/9. Functionally, IGPS catalyzes the conversion of PRFAR and glutamine to IGP, AICAR and glutamate. The HisH subunit catalyzes the hydrolysis of glutamine to glutamate and ammonia as part of the synthesis of IGP and AICAR. The resulting ammonia molecule is channeled to the active site of HisF. The polypeptide is Imidazole glycerol phosphate synthase subunit HisH (Halobacterium salinarum (strain ATCC 700922 / JCM 11081 / NRC-1) (Halobacterium halobium)).